A 559-amino-acid polypeptide reads, in one-letter code: Aspartokinase 3, chloroplastic (559 aa).

A chloroplast-targeting transit peptide spans M1–C85. K88, G91, and S120 together coordinate ATP. Residue E204 coordinates substrate. ACT domains are found at residues I402–S480 and L481–S559.

The protein belongs to the aspartokinase family. In terms of tissue distribution, highly expressed in xylem of leaves and hypocotyls, stele of roots and in trichomes after bolting. Weak expression in veins and mesophyll cells of caulone leaves, inflorescence stems, sepals, petals and stigmata.

It localises to the plastid. The protein localises to the chloroplast. It catalyses the reaction L-aspartate + ATP = 4-phospho-L-aspartate + ADP. It functions in the pathway amino-acid biosynthesis; L-lysine biosynthesis via DAP pathway; (S)-tetrahydrodipicolinate from L-aspartate: step 1/4. Its pathway is amino-acid biosynthesis; L-methionine biosynthesis via de novo pathway; L-homoserine from L-aspartate: step 1/3. It participates in amino-acid biosynthesis; L-threonine biosynthesis; L-threonine from L-aspartate: step 1/5. Allosterically inhibited by lysine, but not by S-adenosyl-L-methionine (SAM). K(0.5) for lysine in the presence of physiological concentrations of substrates is 7.4 uM. No inhibition by threonine or leucine and no activation or inhibition by alanine, cysteine, isoleucine, serine, valine, methionine, glutamine, asparagine, glutamic acid or arginine. Functionally, involved in the first step of essential amino acids lysine, threonine, methionine and isoleucine synthesis via the aspartate-family pathway. The sequence is that of Aspartokinase 3, chloroplastic (AK3) from Arabidopsis thaliana (Mouse-ear cress).